Reading from the N-terminus, the 293-residue chain is Protein phosphatase 1 regulatory subunit 3B (293 aa).

In terms of domain architecture, CBM21 spans 129–237 (RQRIENDHVC…NNQGKNYRII (109 aa)).

Interacts with glycogen, PPP1CC catalytic subunit of PP1 and PYGL. Associates with glycogen particles. Forms complexes with debranching enzyme, glycogen phosphorylase, glycogen synthase and phosphorylase kinase which is necessary for its regulation of PP1 activity.

Acts as a glycogen-targeting subunit for phosphatase PP1. Facilitates interaction of the PP1 with enzymes of the glycogen metabolism and regulates its activity. Suppresses the rate at which PP1 dephosphorylates (inactivates) glycogen phosphorylase and enhances the rate at which it activates glycogen synthase and therefore limits glycogen breakdown. This Danio rerio (Zebrafish) protein is Protein phosphatase 1 regulatory subunit 3B (ppp1r3b).